An 829-amino-acid chain; its full sequence is MHYDFKKVEQDIQGKWNFYTDAKQAQCYVLEMFPYPSGNIHMGHLRNYTIGDVIARYKRACGINVFHPIGWDAFGLPAENAALSYNINPHTWTESNIDNMRCQLKSIGLSYDWDKELATCDPSYYKHEQAFFLDFLKCGLAYRKESLVNWDPVDQTVLANEQVIDGRGWRSGAVVEKRKLFQWFLKITDFAEELLNDLQILDQWPEKVKLMQEKWIGKSQGVVIDFEILGINKTLQVFTTCPHTLFGAAFIAVSFDHPILQYVNDSKVIQLINDFDRKNLISDVSSTIEKFGIDSGLVVKHPLLNVNLPVYIVNFVLMDYATGAIFGCPAHDQRDFEFAKKYSLPVKQVVFPEVDVNLDKEAYVGSGIMKHSDFLDGMTVDEAKKAIVAKLTFLGVCKEITYYRMHDWGISRQRYWGCPIPIIYCKKCGTVPVDKKDLPVTLPKDVDFTKYGNPLDNHPTWKYVKCPSCGMDAERETDTFDTFFESSWYFAAFCGTSNGINKDVCNMLLPVNYYVGGVEHAVLHLLYSRFFCRALTKCGYFNIKEPFSNLITQGMVCHSTYSDEQGNYLFPEEAKKMMENGQHVTVGRAEKMSKSKKNVVNLEYIIDKYGADTARLFILSDTPPERDIEWLDDGIEGASRYLSKLWRVIISYDKFNLNFNKENIIGDDVKYRRSVHKILSGITNDLDFCRLNCAVAKFRELSNIISEMIRTSVNCYVVSEAIYILIRVIEPFIPHIAEKLWENIGGKGMLWNQVWPKADSELLVERNVTIVVQVNGKFVKALTVANDIDDDQLKSMALEIAKNRIGGNVVKDIYVIPKRVINIVAVKPS.

The 'HIGH' region signature appears at 34–44 (PYPSGNIHMGH). The short motif at 591–595 (KMSKS) is the 'KMSKS' region element. Position 594 (K594) interacts with ATP.

This sequence belongs to the class-I aminoacyl-tRNA synthetase family.

It localises to the cytoplasm. It carries out the reaction tRNA(Leu) + L-leucine + ATP = L-leucyl-tRNA(Leu) + AMP + diphosphate. This is Leucine--tRNA ligase from Ehrlichia chaffeensis (strain ATCC CRL-10679 / Arkansas).